Here is a 285-residue protein sequence, read N- to C-terminus: MLYLTKISNAGSEFTENEQKIADFLQANVSELQSVSSRQMAKQLGISQSSIVKFAQKLGAQGFTELRMALIGEYSASREKTNTTALHLHSSITSDDSLEVIARKLNREKELALEQTCALFDYARLQKIIEVISKAPFIQITGLGGSALVGRDLSFKLMKIGYRVACEADTHVQATVSQALKKGDVQIAISYSGSKKEIVLCVEAARKQGATVIAITSLADSPLRRLAHFTLDTVSGETEWRSSSMSTRTAQNSVTDLLFVGLVQLNDVASLKMIQRSSELTQRLK.

In terms of domain architecture, HTH rpiR-type spans 1–77 (MLYLTKISNA…MALIGEYSAS (77 aa)). A DNA-binding region (H-T-H motif) is located at residues 37–56 (SRQMAKQLGISQSSIVKFAQ). In terms of domain architecture, SIS spans 128–279 (IIEVISKAPF…SLKMIQRSSE (152 aa)).

In terms of assembly, homotetramer.

The protein operates within amino-sugar metabolism; N-acetylmuramate degradation [regulation]. Represses the expression of the murPQ operon involved in the uptake and degradation of N-acetylmuramic acid (MurNAc). Binds to two adjacent inverted repeats within the operator region. MurNAc 6-phosphate, the substrate of MurQ, is the specific inducer that weakens binding of MurR to the operator. In Shigella boydii serotype 4 (strain Sb227), this protein is HTH-type transcriptional regulator MurR.